We begin with the raw amino-acid sequence, 334 residues long: MTQKNLLLLCGGGGDEHSISLLSANFFEAQLATLPHFNVLRVELNAKGQYHTQAGELCELTNSQQLRFDDETKAPWNVDYVIPCIHGYPGETGDIQSYFELINLPYFGCDSESSSNCFNKVTAKMWFSALGIPNTPYIFLSEFNQQSLEQAEAALAKWGSIFIKAASQGSSVGCYRVDSIEQLASSLEEAFTFSPYVVIEKTITARELEVAAYEADGEIIATKPGEIICASNTFYSFDEKYAENSQAQTVIEADVDEAIAKQIQEYAIKAFKGMKLRHLSRIDFFLTEDNEILLNEINTFPGQTQISMFPKMLQNHGHNFAQYLSGNILAQLKS.

Residues 124 to 329 (KMWFSALGIP…FAQYLSGNIL (206 aa)) form the ATP-grasp domain. 154 to 209 (ALAKWGSIFIKAASQGSSVGCYRVDSIEQLASSLEEAFTFSPYVVIEKTITARELE) lines the ATP pocket. Residues aspartate 283, glutamate 296, and asparagine 298 each coordinate Mg(2+).

Belongs to the D-alanine--D-alanine ligase family. The cofactor is Mg(2+). It depends on Mn(2+) as a cofactor.

Its subcellular location is the cytoplasm. The enzyme catalyses 2 D-alanine + ATP = D-alanyl-D-alanine + ADP + phosphate + H(+). It participates in cell wall biogenesis; peptidoglycan biosynthesis. Cell wall formation. This Shewanella pealeana (strain ATCC 700345 / ANG-SQ1) protein is D-alanine--D-alanine ligase.